Reading from the N-terminus, the 144-residue chain is MEKFNNIAQLKDSGLKVTGPRLKILDLFETHAEEHLSAEDVYRILLEEGVEIGVATIYRVLTQFEQAGILQRHHFETGKAVYELDKGDHHDHIVCVKCGEVTEFHNPEIEALQDKIAEENGYRIVDHALYMYGVCSDCQAKGKR.

The segment at 1-86 (MEKFNNIAQL…TGKAVYELDK (86 aa)) is DNA-binding. Zn(2+) is bound by residues His-35 and Glu-83. The dimerization stretch occupies residues 87 to 144 (GDHHDHIVCVKCGEVTEFHNPEIEALQDKIAEENGYRIVDHALYMYGVCSDCQAKGKR). 2 residues coordinate Fe cation: His-89 and Asp-91. Zn(2+)-binding residues include His-92, Cys-95, Cys-98, and Glu-103. Residues Glu-110 and His-127 each coordinate Fe cation.

It belongs to the Fur family. Homodimer.

The protein resides in the cytoplasm. Acts as a global negative controlling element, employing Fe(2+) as a cofactor to bind the operator of the repressed genes. Regulates the expression of the fbp protein. This chain is Ferric uptake regulation protein (fur), found in Neisseria meningitidis serogroup A / serotype 4A (strain DSM 15465 / Z2491).